The primary structure comprises 130 residues: Small ribosomal subunit protein uS8 (130 aa).

It belongs to the universal ribosomal protein uS8 family. In terms of assembly, part of the 30S ribosomal subunit.

One of the primary rRNA binding proteins, it binds directly to 16S rRNA central domain where it helps coordinate assembly of the platform of the 30S subunit. The chain is Small ribosomal subunit protein uS8 from Pyrococcus furiosus (strain ATCC 43587 / DSM 3638 / JCM 8422 / Vc1).